Consider the following 105-residue polypeptide: Circadian clock oscillator protein KaiB1 (105 aa).

The protein belongs to the KaiB family. In terms of assembly, homotetramer in solution and crystals formed by 2 dimers. Only elutes as a homotetramer in size exclusion chromatography, interacts with KaiC1 and KaiC3. The KaiABC complex composition changes during the circadian cycle to control KaiC phosphorylation. Complexes KaiC(6), KaiA(2-4):KaiC(6), KaiB(6):KaiC(6) and KaiC(6):KaiB(6):KaiA(12) are among the most important forms, many form cooperatively. Undergoes a major conformational rearrangment; in the free state forms homotetramers as a dimer of dimers. When bound to the CI domain of KaiC switches to a monomeric thioredoxin-fold (KaiB(fs)). KaiB(fs) binds CikA, leading it to dephosphorylate phospho-RpaA.

Its function is as follows. Key component of the KaiABC oscillator complex, which constitutes the main circadian regulator in cyanobacteria. Complex composition changes during the circadian cycle to control KaiC phosphorylation. KaiA stimulates KaiC autophosphorylation, while KaiB sequesters KaiA, leading to KaiC autodephosphorylation. Phospho-Ser-431 KaiC accumulation triggers binding of KaiB to form the KaiB(6):KaiC(6) complex, leading to changes in output regulators CikA and SasA. KaiB switches to a thioredoxin-like fold (KaiB(fs)) when bound to KaiC. KaiB(6):KaiC(6) formation exposes a site for KaiA binding that sequesters KaiA from KaiC, making the KaiC(6):KaiB(6):KaiA(12) complex that results in KaiC autodephosphorylation. Component of the oscillator and circadian clock in this organism, enhances fitness in a rhythmic environment. The homotetramer reduces the ATPase activity of KaiC3 by 35%. In terms of biological role, a metamorphic protein which reversibly switches between an inactive tetrameric fold and a rare, thioredoxin-like monomeric fold (KaiB(fs)). KaiB(fs) binds phospho-KaiC, KaiA and CikA. KaiA and CikA compete for binding to KaiB(fs), and KaiB(fs) and SasA compete for binding to KaiC, thus the clock oscillator and output signal pathway are tightly coupled. This Synechocystis sp. (strain ATCC 27184 / PCC 6803 / Kazusa) protein is Circadian clock oscillator protein KaiB1.